The chain runs to 132 residues: Small ribosomal subunit protein uS8 (132 aa).

This sequence belongs to the universal ribosomal protein uS8 family. In terms of assembly, part of the 30S ribosomal subunit. Contacts proteins S5 and S12.

One of the primary rRNA binding proteins, it binds directly to 16S rRNA central domain where it helps coordinate assembly of the platform of the 30S subunit. This is Small ribosomal subunit protein uS8 from Xanthomonas euvesicatoria pv. vesicatoria (strain 85-10) (Xanthomonas campestris pv. vesicatoria).